We begin with the raw amino-acid sequence, 153 residues long: UPF0756 membrane protein BCB4264_A4705 (153 aa).

4 helical membrane passes run 8–28 (FLFI…TVAI), 54–74 (LGVT…EIGF), 87–107 (WIAL…VQLL), and 117–137 (LVFG…GPLI).

The protein belongs to the UPF0756 family.

Its subcellular location is the cell membrane. This is UPF0756 membrane protein BCB4264_A4705 from Bacillus cereus (strain B4264).